Here is a 332-residue protein sequence, read N- to C-terminus: Ketol-acid reductoisomerase (NADP(+)) 1 (332 aa).

One can recognise a KARI N-terminal Rossmann domain in the interval 2 to 182 (AELFYDADAD…GGTRAGVIKT (181 aa)). NADP(+) contacts are provided by residues 25-28 (YGSQ), Ser-51, Ser-53, and 83-86 (DPIQ). His-108 is a catalytic residue. Gly-134 serves as a coordination point for NADP(+). The region spanning 183 to 328 (TFTEETETDL…KELRKLMSWV (146 aa)) is the KARI C-terminal knotted domain. 4 residues coordinate Mg(2+): Asp-191, Glu-195, Glu-227, and Glu-231. Ser-252 contacts substrate.

The protein belongs to the ketol-acid reductoisomerase family. Mg(2+) serves as cofactor.

It carries out the reaction (2R)-2,3-dihydroxy-3-methylbutanoate + NADP(+) = (2S)-2-acetolactate + NADPH + H(+). It catalyses the reaction (2R,3R)-2,3-dihydroxy-3-methylpentanoate + NADP(+) = (S)-2-ethyl-2-hydroxy-3-oxobutanoate + NADPH + H(+). It participates in amino-acid biosynthesis; L-isoleucine biosynthesis; L-isoleucine from 2-oxobutanoate: step 2/4. Its pathway is amino-acid biosynthesis; L-valine biosynthesis; L-valine from pyruvate: step 2/4. Its function is as follows. Involved in the biosynthesis of branched-chain amino acids (BCAA). Catalyzes an alkyl-migration followed by a ketol-acid reduction of (S)-2-acetolactate (S2AL) to yield (R)-2,3-dihydroxy-isovalerate. In the isomerase reaction, S2AL is rearranged via a Mg-dependent methyl migration to produce 3-hydroxy-3-methyl-2-ketobutyrate (HMKB). In the reductase reaction, this 2-ketoacid undergoes a metal-dependent reduction by NADPH to yield (R)-2,3-dihydroxy-isovalerate. The polypeptide is Ketol-acid reductoisomerase (NADP(+)) 1 (Streptomyces coelicolor (strain ATCC BAA-471 / A3(2) / M145)).